The following is a 75-amino-acid chain: uncharacterized protein (75 aa).

It belongs to the HSBP1 family.

This is an uncharacterized protein from Schizosaccharomyces pombe (strain 972 / ATCC 24843) (Fission yeast).